A 390-amino-acid polypeptide reads, in one-letter code: MGVDLQVTVNLDHPELLDAPVLETGVLSAEGRALPTPPRPRIVGVGTAVTRTSYSQQEVLDAFGITDRKVRSIFLNSAIERRNLTLPPMDSDSVRVSESQGDLLDKHKKLAIEMGAEALHACLKRCGAELSDLRHLCCVTSTGFLTPGLSALLIRELGIDRHCSRSDIVGMGCNAGLNALNVVAGWSAAHPGELAVVLCAEACSAAYTMDSTMRTAVVNSLFGDGAAAVALLAGPGGATPATSEGPTVLKFASCIIPEAVDAMRYDWDRTQGRFSFFLDPQIPYVVGAHAETVVDRLLSGTGLRRSDIGHWLVHSGGKKVIDAVVVNLGLTRHDVRHTIGVLRDQGNVSSGSFLFSYERLLEEGITRPGEYGVLMTMGPGSTIETALVQW.

Cysteine 173 is a catalytic residue.

This sequence belongs to the thiolase-like superfamily. Chalcone/stilbene synthases family.

It catalyses the reaction 4 malonyl-CoA + 4 H(+) = (3,5-dihydroxyphenyl)acetyl-CoA + 4 CO2 + 3 CoA + H2O. The protein operates within antibiotic biosynthesis; vancomycin biosynthesis. Its function is as follows. Involved in the biosynthesis of the nonproteinogenic amino acid monomer (S)-3,5-dihydroxyphenylglycine (Dpg) responsible of the production of vancomycin and teicoplanin antibiotics. Catalyzes the Claisen condensation of four molecules of malonyl-CoA to yield 3,5-dihydroxyphenylacetyl-CoA (DPA-CoA) and three free coenzyme A (CoA). DpgA requires the presence of the dehydratases DpgB and DpgD to facilitate the aromatization of the DPA-S-DgpA or DPA-S-CoA intermediate. In Streptomyces toyocaensis, this protein is 3,5-dihydroxyphenylacetyl-CoA synthase.